Consider the following 101-residue polypeptide: UPF0235 protein Cphamn1_2066 (101 aa).

This sequence belongs to the UPF0235 family.

The polypeptide is UPF0235 protein Cphamn1_2066 (Chlorobium phaeobacteroides (strain BS1)).